A 373-amino-acid polypeptide reads, in one-letter code: Glutamate 5-kinase (373 aa).

Lys15 is an ATP binding site. Substrate is bound by residues Ser55, Asp142, and Asn154. ATP is bound by residues 174 to 175 (TD) and 216 to 222 (TGGMATK). Residues 281-359 (AGSIVVDAGA…SEIERILGFR (79 aa)) form the PUA domain.

This sequence belongs to the glutamate 5-kinase family.

The protein resides in the cytoplasm. The catalysed reaction is L-glutamate + ATP = L-glutamyl 5-phosphate + ADP. It participates in amino-acid biosynthesis; L-proline biosynthesis; L-glutamate 5-semialdehyde from L-glutamate: step 1/2. Catalyzes the transfer of a phosphate group to glutamate to form L-glutamate 5-phosphate. The sequence is that of Glutamate 5-kinase from Geobacter sp. (strain M21).